A 504-amino-acid chain; its full sequence is Maturase K (504 aa).

The protein belongs to the intron maturase 2 family. MatK subfamily.

It localises to the plastid. The protein resides in the chloroplast. In terms of biological role, usually encoded in the trnK tRNA gene intron. Probably assists in splicing its own and other chloroplast group II introns. The polypeptide is Maturase K (Quercus petraea (Durmast oak)).